Reading from the N-terminus, the 602-residue chain is DEAD-box ATP-dependent RNA helicase 53 (602 aa).

Residues 33-43 show a composition bias toward low complexity; the sequence is ASPLDPCRGPA. Residues 33-76 are disordered; that stretch reads ASPLDPCRGPAAPEPPRRRAFHGSPSPLGFRSTPASWSSPEAGA. The Q motif signature appears at 84–112; it reads LEVARLGISPWIVERLAARGITRLFPIQR. One can recognise a Helicase ATP-binding domain in the interval 115–288; that stretch reads LDPAMQGKDM…SKYLKDPIII (174 aa). 128–135 serves as a coordination point for ATP; it reads ARTGTGKT. The DEAD box motif lies at 236–239; it reads DEAD. Positions 317–462 constitute a Helicase C-terminal domain; it reads ILGPLIKEHA…LPKIEVADEA (146 aa). Residues 503-602 form a disordered region; sequence FGDFDGFGSS…GRSGGFDDSN (100 aa).

It belongs to the DEAD box helicase family. DDX21/DDX50 subfamily.

The catalysed reaction is ATP + H2O = ADP + phosphate + H(+). The protein is DEAD-box ATP-dependent RNA helicase 53 of Oryza sativa subsp. japonica (Rice).